A 646-amino-acid chain; its full sequence is ATP-dependent zinc metalloprotease FtsH (646 aa).

Residues 1–27 (MTNNQTDRPRPPGPESRRFDNNDKNNR) are disordered. At 1–35 (MTNNQTDRPRPPGPESRRFDNNDKNNRNRWGPIPS) the chain is on the cytoplasmic side. Residues 7–26 (DRPRPPGPESRRFDNNDKNN) are compositionally biased toward basic and acidic residues. The helical transmembrane segment at 36–56 (WAWIVLIVALLLNWLVAPILF) threads the bilayer. Topologically, residues 57 to 144 (PEGKGAVSIP…QPESSTRSLL (88 aa)) are extracellular. A helical membrane pass occupies residues 145–165 (LSILISFGPTILFFLLFLWLI). The Cytoplasmic portion of the chain corresponds to 166–646 (SKAQSSQQGL…GLGEKQPEPA (481 aa)). 237-244 (GPPGTGKT) contacts ATP. Residue H459 participates in Zn(2+) binding. E460 is a catalytic residue. Positions 463 and 535 each coordinate Zn(2+).

In the central section; belongs to the AAA ATPase family. This sequence in the C-terminal section; belongs to the peptidase M41 family. As to quaternary structure, homohexamer. Requires Zn(2+) as cofactor.

It localises to the cell membrane. Acts as a processive, ATP-dependent zinc metallopeptidase for both cytoplasmic and membrane proteins. Plays a role in the quality control of integral membrane proteins. This Thermobaculum terrenum (strain ATCC BAA-798 / CCMEE 7001 / YNP1) protein is ATP-dependent zinc metalloprotease FtsH.